The following is a 91-amino-acid chain: Large ribosomal subunit protein uL22 (91 aa).

This sequence belongs to the universal ribosomal protein uL22 family. In terms of assembly, part of the 50S ribosomal subunit.

In terms of biological role, this protein binds specifically to 23S rRNA; its binding is stimulated by other ribosomal proteins, e.g. L4, L17, and L20. It is important during the early stages of 50S assembly. It makes multiple contacts with different domains of the 23S rRNA in the assembled 50S subunit and ribosome. The globular domain of the protein is located near the polypeptide exit tunnel on the outside of the subunit, while an extended beta-hairpin is found that lines the wall of the exit tunnel in the center of the 70S ribosome. The sequence is that of Large ribosomal subunit protein uL22 (rplV) from Ash yellows phytoplasma.